The chain runs to 345 residues: MTDKTSLSYKDAGVDIDAGNALVDRIKGVVKKTRRSEVMGGLGGFGALCALPQKYREPVLVSGTDGVGTKLRLAMDLKRHDAIGIDLVAMCVNDLVVQGAEPLFFLDYYATGKLDVDTAASVINGIAEGCLQSGCALVGGETAEMPGMYHGEDYDVAGFCVGVVEKSEIIDGSRVAEGDVLIALGSSGPHSNGYSLVRKIIDVSGCDPQTTLLEGKPLADHLLEPTRIYVKSVLELIENIDVHAIAHLTGGGFWENIPRVLPENTQAVINESSWQWPAIFTWLRTAGNVSRHEMYRAFNCGVGMVIALSAPEADKALALLNEKGENAWKIGIIKASDSEQRVVIE.

Belongs to the AIR synthase family.

It is found in the cytoplasm. It carries out the reaction 2-formamido-N(1)-(5-O-phospho-beta-D-ribosyl)acetamidine + ATP = 5-amino-1-(5-phospho-beta-D-ribosyl)imidazole + ADP + phosphate + H(+). The protein operates within purine metabolism; IMP biosynthesis via de novo pathway; 5-amino-1-(5-phospho-D-ribosyl)imidazole from N(2)-formyl-N(1)-(5-phospho-D-ribosyl)glycinamide: step 2/2. The chain is Phosphoribosylformylglycinamidine cyclo-ligase from Salmonella typhi.